The following is a 317-amino-acid chain: Protein phosphatase PTC7 homolog fig (317 aa).

The PPM-type phosphatase domain maps to 46–312; the sequence is PYLVTVVQGR…DDITLILASV (267 aa). Residues Asp-90, Gly-91, and Asp-235 each contribute to the Mn(2+) site.

It belongs to the PP2C family. The cofactor is Mg(2+). Mn(2+) is required as a cofactor.

The enzyme catalyses O-phospho-L-seryl-[protein] + H2O = L-seryl-[protein] + phosphate. The catalysed reaction is O-phospho-L-threonyl-[protein] + H2O = L-threonyl-[protein] + phosphate. This is Protein phosphatase PTC7 homolog fig from Drosophila erecta (Fruit fly).